Reading from the N-terminus, the 485-residue chain is Glutamate--tRNA ligase (485 aa).

Positions 12–22 (PSPTGYMHIGN) match the 'HIGH' region motif. The short motif at 253 to 257 (KLSKR) is the 'KMSKS' region element. Position 256 (K256) interacts with ATP.

This sequence belongs to the class-I aminoacyl-tRNA synthetase family. Glutamate--tRNA ligase type 1 subfamily. As to quaternary structure, monomer.

It is found in the cytoplasm. The catalysed reaction is tRNA(Glu) + L-glutamate + ATP = L-glutamyl-tRNA(Glu) + AMP + diphosphate. In terms of biological role, catalyzes the attachment of glutamate to tRNA(Glu) in a two-step reaction: glutamate is first activated by ATP to form Glu-AMP and then transferred to the acceptor end of tRNA(Glu). The polypeptide is Glutamate--tRNA ligase (Clostridium acetobutylicum (strain ATCC 824 / DSM 792 / JCM 1419 / IAM 19013 / LMG 5710 / NBRC 13948 / NRRL B-527 / VKM B-1787 / 2291 / W)).